The chain runs to 40 residues: Beta-defensin 2 (40 aa).

Cystine bridges form between Cys-7–Cys-36, Cys-14–Cys-29, and Cys-19–Cys-37.

This sequence belongs to the beta-defensin family. Neutrophilic granules.

The protein localises to the secreted. In terms of biological role, has bactericidal activity. Active against E.coli ML35 and S.aureus 502A. This Bos taurus (Bovine) protein is Beta-defensin 2 (DEFB2).